We begin with the raw amino-acid sequence, 350 residues long: MERYDILRDLGSGNFGVAKLVREKANGEFYAVKYIERGLKIDEHVQREIINHRDLKHPNIIRFKEVFVTPTHLAIVMEYAAGGELFERICNAGRFSEDEGRYYFKQLISGVSYCHAMQICHRDLKLENTLLDGSPSSHLKICDFGYSKSSVLHSQPKSTVGTPAYVAPEVLSRKEYNGKIADVWSCGVTLYVMLVGAYPFEDPEDPRNIRNTIQRILSVHYTIPDYVRISSECKHLLSRIFVADPDKRITVPEIEKHPWFLKGPLVVPPEEEKCDNGVEEEEEEEEKCRQSVEEIVKIIEEARKGVNGTDNNGGLGLIDGSIDLDDIDDADIYDDVDDDEERNGDFVCAL.

The region spanning 4–260 (YDILRDLGSG…VPEIEKHPWF (257 aa)) is the Protein kinase domain. ATP contacts are provided by residues 10–18 (LGSGNFGVA) and lysine 33. Catalysis depends on aspartate 123, which acts as the Proton acceptor. The stretch at 270-303 (EEEKCDNGVEEEEEEEEKCRQSVEEIVKIIEEAR) forms a coiled coil.

The protein belongs to the protein kinase superfamily. Ser/Thr protein kinase family. As to expression, expressed in seedlings.

It catalyses the reaction L-seryl-[protein] + ATP = O-phospho-L-seryl-[protein] + ADP + H(+). The enzyme catalyses L-threonyl-[protein] + ATP = O-phospho-L-threonyl-[protein] + ADP + H(+). This Arabidopsis thaliana (Mouse-ear cress) protein is Serine/threonine-protein kinase SRK2F (SRK2F).